Here is a 160-residue protein sequence, read N- to C-terminus: Large ribosomal subunit protein eL21 (160 aa).

The protein belongs to the eukaryotic ribosomal protein eL21 family.

The polypeptide is Large ribosomal subunit protein eL21 (RPL21) (Encephalitozoon cuniculi (strain GB-M1) (Microsporidian parasite)).